A 415-amino-acid chain; its full sequence is Serine hydroxymethyltransferase (415 aa).

Residues Leu-121 and 125-127 each bind (6S)-5,6,7,8-tetrahydrofolate; that span reads GHL. Residue Lys-230 is modified to N6-(pyridoxal phosphate)lysine. 355 to 357 lines the (6S)-5,6,7,8-tetrahydrofolate pocket; sequence SPF.

The protein belongs to the SHMT family. Homodimer. Pyridoxal 5'-phosphate is required as a cofactor.

Its subcellular location is the cytoplasm. The catalysed reaction is (6R)-5,10-methylene-5,6,7,8-tetrahydrofolate + glycine + H2O = (6S)-5,6,7,8-tetrahydrofolate + L-serine. Its pathway is one-carbon metabolism; tetrahydrofolate interconversion. It functions in the pathway amino-acid biosynthesis; glycine biosynthesis; glycine from L-serine: step 1/1. Functionally, catalyzes the reversible interconversion of serine and glycine with tetrahydrofolate (THF) serving as the one-carbon carrier. This reaction serves as the major source of one-carbon groups required for the biosynthesis of purines, thymidylate, methionine, and other important biomolecules. Also exhibits THF-independent aldolase activity toward beta-hydroxyamino acids, producing glycine and aldehydes, via a retro-aldol mechanism. This Lactococcus lactis subsp. cremoris (strain MG1363) protein is Serine hydroxymethyltransferase.